Reading from the N-terminus, the 217-residue chain is Large ribosomal subunit protein uL1 (217 aa).

The protein belongs to the universal ribosomal protein uL1 family. Component of the large ribosomal subunit (LSU). Mature N.crassa ribosomes consist of a small (40S) and a large (60S) subunit. The 40S small subunit contains 1 molecule of ribosomal RNA (18S rRNA) and at least 32 different proteins. The large 60S subunit contains 3 rRNA molecules (26S, 5.8S and 5S rRNA) and at least 42 different proteins. uL1 forms part of the L1 stalk.

The protein localises to the cytoplasm. Its function is as follows. Component of the ribosome, a large ribonucleoprotein complex responsible for the synthesis of proteins in the cell. The small ribosomal subunit (SSU) binds messenger RNAs (mRNAs) and translates the encoded message by selecting cognate aminoacyl-transfer RNA (tRNA) molecules. The large subunit (LSU) contains the ribosomal catalytic site termed the peptidyl transferase center (PTC), which catalyzes the formation of peptide bonds, thereby polymerizing the amino acids delivered by tRNAs into a polypeptide chain. The nascent polypeptides leave the ribosome through a tunnel in the LSU and interact with protein factors that function in enzymatic processing, targeting, and the membrane insertion of nascent chains at the exit of the ribosomal tunnel. uL1 forms part of the L1 stalk, a mobile element that plays a role in evacuating the exit-site tRNA. The protein is Large ribosomal subunit protein uL1 (crp-74) of Neurospora crassa (strain ATCC 24698 / 74-OR23-1A / CBS 708.71 / DSM 1257 / FGSC 987).